The sequence spans 171 residues: 3-hydroxydecanoyl-[acyl-carrier-protein] dehydratase (171 aa).

Residue His70 is part of the active site.

Belongs to the thioester dehydratase family. FabA subfamily. Homodimer.

The protein localises to the cytoplasm. It catalyses the reaction a (3R)-hydroxyacyl-[ACP] = a (2E)-enoyl-[ACP] + H2O. It carries out the reaction (3R)-hydroxydecanoyl-[ACP] = (2E)-decenoyl-[ACP] + H2O. The enzyme catalyses (2E)-decenoyl-[ACP] = (3Z)-decenoyl-[ACP]. The protein operates within lipid metabolism; fatty acid biosynthesis. In terms of biological role, necessary for the introduction of cis unsaturation into fatty acids. Catalyzes the dehydration of (3R)-3-hydroxydecanoyl-ACP to E-(2)-decenoyl-ACP and then its isomerization to Z-(3)-decenoyl-ACP. Can catalyze the dehydratase reaction for beta-hydroxyacyl-ACPs with saturated chain lengths up to 16:0, being most active on intermediate chain length. This Shewanella pealeana (strain ATCC 700345 / ANG-SQ1) protein is 3-hydroxydecanoyl-[acyl-carrier-protein] dehydratase.